A 96-amino-acid chain; its full sequence is DNA/RNA-binding protein Alba (96 aa).

The protein belongs to the histone-like Alba family.

It localises to the cytoplasm. Its subcellular location is the chromosome. In terms of biological role, binds double-stranded DNA tightly but without sequence specificity. Involved in DNA compaction. In Methanocella arvoryzae (strain DSM 22066 / NBRC 105507 / MRE50), this protein is DNA/RNA-binding protein Alba.